A 265-amino-acid chain; its full sequence is Mlc titration factor A (265 aa).

The Zn(2+) site is built by His111, His148, His152, and Glu211.

Belongs to the MtfA family. Interacts with Mlc. The cofactor is Zn(2+).

Its subcellular location is the cytoplasm. Functionally, involved in the modulation of the activity of the glucose-phosphotransferase system (glucose-PTS). Interacts with the transcriptional repressor Mlc, preventing its interaction with DNA and leading to the modulation of expression of genes regulated by Mlc, including ptsG, which encodes the PTS system glucose-specific EIICB component. In terms of biological role, shows zinc-dependent metallopeptidase activity. This Escherichia coli (strain UTI89 / UPEC) protein is Mlc titration factor A.